A 216-amino-acid polypeptide reads, in one-letter code: GTPase IMAP family member GIMD1 (216 aa).

Positions 5 to 216 (KMTINLALFG…ENCYQVLTFK (212 aa)) constitute an AIG1-type G domain. GTP is bound by residues 14–22 (GMTQSGKSS), Ser35, and 147–149 (HAE).

The protein belongs to the TRAFAC class TrmE-Era-EngA-EngB-Septin-like GTPase superfamily. AIG1/Toc34/Toc159-like paraseptin GTPase family. IAN subfamily.

In Bos taurus (Bovine), this protein is GTPase IMAP family member GIMD1 (GIMD1).